Consider the following 148-residue polypeptide: HTH-type transcriptional regulator SarZ (148 aa).

An HTH marR-type domain is found at 9–139; it reads SKQLCFLFYV…IINNLRNFVS (131 aa). Positions 55 to 78 form a DNA-binding region, H-T-H motif; that stretch reads IKKLGERVFLDSGTLTPLLKKLEK.

The protein belongs to the SarZ family.

The protein resides in the cytoplasm. Activates transcription of virulence factors alpha- and beta hemolysin genes (hla and hlb). Also, activates RNAIII expression, a central regulator transcribed from the agr locus. In Staphylococcus aureus (strain USA300), this protein is HTH-type transcriptional regulator SarZ (sarZ).